The following is a 504-amino-acid chain: Glucose-6-phosphate isomerase (504 aa).

Glutamate 333 functions as the Proton donor in the catalytic mechanism. Residues histidine 364 and lysine 473 contribute to the active site.

This sequence belongs to the GPI family.

The protein resides in the cytoplasm. The enzyme catalyses alpha-D-glucose 6-phosphate = beta-D-fructose 6-phosphate. It participates in carbohydrate biosynthesis; gluconeogenesis. Its pathway is carbohydrate degradation; glycolysis; D-glyceraldehyde 3-phosphate and glycerone phosphate from D-glucose: step 2/4. Functionally, catalyzes the reversible isomerization of glucose-6-phosphate to fructose-6-phosphate. The sequence is that of Glucose-6-phosphate isomerase from Xanthomonas oryzae pv. oryzae (strain MAFF 311018).